The following is a 354-amino-acid chain: Vanillate O-demethylase oxygenase subunit (354 aa).

Residues 7 to 107 (WYVACTPDEI…VEERYGFIWV (101 aa)) form the Rieske domain. [2Fe-2S] cluster contacts are provided by C47, H49, C66, and H69.

It belongs to the bacterial ring-hydroxylating dioxygenase alpha subunit family. This demethylase system consists of two proteins: an oxygenase and an oxygenase reductase. [2Fe-2S] cluster serves as cofactor. Requires Fe cation as cofactor.

The enzyme catalyses vanillate + NADH + O2 + H(+) = 3,4-dihydroxybenzoate + formaldehyde + NAD(+) + H2O. Its pathway is xenobiotic degradation; vanillyl-alcohol degradation. This Pseudomonas sp. (strain HR199 / DSM 7063) protein is Vanillate O-demethylase oxygenase subunit (vanA).